A 210-amino-acid polypeptide reads, in one-letter code: Redox-sensing transcriptional repressor Rex (210 aa).

Residues 17–56 (KYHRYLNELMKNDVDRISSKELGEKIGFTASQIRQDLNCF) constitute a DNA-binding region (H-T-H motif). 91–96 (GAGNIG) serves as a coordination point for NAD(+).

Belongs to the transcriptional regulatory Rex family. In terms of assembly, homodimer.

The protein resides in the cytoplasm. Functionally, modulates transcription in response to changes in cellular NADH/NAD(+) redox state. The protein is Redox-sensing transcriptional repressor Rex of Clostridium botulinum (strain Eklund 17B / Type B).